A 538-amino-acid chain; its full sequence is Nicotinate phosphoribosyltransferase (538 aa).

Nicotinate-binding residues include Y21 and T210. H213 bears the Phosphohistidine mark. R318 is a binding site for nicotinate. T380 contacts 5-phospho-alpha-D-ribose 1-diphosphate.

It belongs to the NAPRTase family. Homodimer. The cofactor is Mg(2+). It depends on Mn(2+) as a cofactor. Transiently phosphorylated on a His residue during the reaction cycle. Phosphorylation strongly increases the affinity for substrates and increases the rate of nicotinate D-ribonucleotide production. Dephosphorylation regenerates the low-affinity form of the enzyme, leading to product release.

The protein localises to the cytoplasm. Its subcellular location is the cytosol. It carries out the reaction nicotinate + 5-phospho-alpha-D-ribose 1-diphosphate + ATP + H2O = nicotinate beta-D-ribonucleotide + ADP + phosphate + diphosphate. Its pathway is cofactor biosynthesis; NAD(+) biosynthesis; nicotinate D-ribonucleotide from nicotinate: step 1/1. Catalyzes the first step in the biosynthesis of NAD from nicotinic acid, the ATP-dependent synthesis of beta-nicotinate D-ribonucleotide from nicotinate and 5-phospho-D-ribose 1-phosphate. Helps prevent cellular oxidative stress via its role in NAD biosynthesis. This is Nicotinate phosphoribosyltransferase (NAPRT) from Bos taurus (Bovine).